The following is a 478-amino-acid chain: Lysine-rich nucleolar protein 1 (478 aa).

Residues 1 to 231 form a disordered region; that stretch reads MVSKTQKADL…THQEGDILLV (231 aa). Lys7 participates in a covalent cross-link: Glycyl lysine isopeptide (Lys-Gly) (interchain with G-Cter in SUMO2). The span at 17-27 shows a compositional bias: basic residues; sequence KKKKKKKKKRV. The segment covering 33–45 has biased composition (polar residues); that stretch reads EPETQYSVLNSND. Ser51 and Ser59 each carry phosphoserine. Residues 54–63 show a composition bias toward polar residues; the sequence is RATSPSNNVD. Basic residues-rich tracts occupy residues 73 to 82 and 120 to 129; these read SKRKKKKKSC and EKKKKRRKSL. A Glycyl lysine isopeptide (Lys-Gly) (interchain with G-Cter in SUMO2) cross-link involves residue Lys140. The residue at position 142 (Ser142) is a Phosphoserine. The segment covering 143–153 has biased composition (basic and acidic residues); sequence PDPKHAKEVSK. 2 stretches are compositionally biased toward basic residues: residues 154-165 and 204-222; these read AGRKSKKQRKEK and QKRK…KKKT. A Glycyl lysine isopeptide (Lys-Gly) (interchain with G-Cter in SUMO1); alternate cross-link involves residue Lys250. Lys250 is covalently cross-linked (Glycyl lysine isopeptide (Lys-Gly) (interchain with G-Cter in SUMO2); alternate). The segment at 258-314 is disordered; that stretch reads PIDSPKAPGKKKVKSKKKVEQPVGEGLAVKRKKKKKKRKENGVKEDPWQEEKEESDT. A Phosphoserine modification is found at Ser261. The span at 265–274 shows a compositional bias: basic residues; the sequence is PGKKKVKSKK. Residues Lys275 and Lys287 each participate in a glycyl lysine isopeptide (Lys-Gly) (interchain with G-Cter in SUMO2) cross-link. Positions 286–296 are enriched in basic residues; the sequence is VKRKKKKKKRK. The span at 297–307 shows a compositional bias: basic and acidic residues; it reads ENGVKEDPWQE. Lys309 participates in a covalent cross-link: Glycyl lysine isopeptide (Lys-Gly) (interchain with G-Cter in SUMO2). Positions 310-478 are interaction with ZNF106; sequence EESDTDLEVV…NASKSIKLQD (169 aa). A Phosphoserine modification is found at Ser312. Residue Thr314 is modified to Phosphothreonine. Lys323 is covalently cross-linked (Glycyl lysine isopeptide (Lys-Gly) (interchain with G-Cter in SUMO2)). Basic and acidic residues predominate over residues 340–357; sequence QEEIDRESGKTEASEPKK. The tract at residues 340–378 is disordered; that stretch reads QEEIDRESGKTEASEPKKWTVGLSVKTEASEPKKWTGTQ. Residues Lys373, Lys393, Lys395, Lys427, and Lys462 each participate in a glycyl lysine isopeptide (Lys-Gly) (interchain with G-Cter in SUMO2) cross-link.

In terms of assembly, interacts with ZNF106. As to expression, expressed in testis.

The protein resides in the nucleus. It is found in the nucleolus. The sequence is that of Lysine-rich nucleolar protein 1 (Knop1) from Mus musculus (Mouse).